Consider the following 114-residue polypeptide: UPF0102 protein CD630_12710 (114 aa).

This sequence belongs to the UPF0102 family.

The sequence is that of UPF0102 protein CD630_12710 from Clostridioides difficile (strain 630) (Peptoclostridium difficile).